An 89-amino-acid chain; its full sequence is Small ribosomal subunit protein uS17 (89 aa).

It belongs to the universal ribosomal protein uS17 family. As to quaternary structure, part of the 30S ribosomal subunit.

In terms of biological role, one of the primary rRNA binding proteins, it binds specifically to the 5'-end of 16S ribosomal RNA. The polypeptide is Small ribosomal subunit protein uS17 (Coxiella burnetii (strain Dugway 5J108-111)).